A 100-amino-acid chain; its full sequence is UPF0235 protein NE0395 (100 aa).

The protein belongs to the UPF0235 family.

The sequence is that of UPF0235 protein NE0395 from Nitrosomonas europaea (strain ATCC 19718 / CIP 103999 / KCTC 2705 / NBRC 14298).